Here is a 226-residue protein sequence, read N- to C-terminus: Endonuclease V (226 aa).

Positions 43 and 111 each coordinate Mg(2+).

Belongs to the endonuclease V family. Requires Mg(2+) as cofactor.

Its subcellular location is the cytoplasm. It carries out the reaction Endonucleolytic cleavage at apurinic or apyrimidinic sites to products with a 5'-phosphate.. In terms of biological role, DNA repair enzyme involved in the repair of deaminated bases. Selectively cleaves double-stranded DNA at the second phosphodiester bond 3' to a deoxyinosine leaving behind the intact lesion on the nicked DNA. The protein is Endonuclease V of Nocardia farcinica (strain IFM 10152).